Here is a 1095-residue protein sequence, read N- to C-terminus: DNA-directed RNA polymerase subunit beta (1095 aa).

Residues Asp-1069 to Glu-1095 are disordered.

Belongs to the RNA polymerase beta chain family. As to quaternary structure, in cyanobacteria the RNAP catalytic core is composed of 2 alpha, 1 beta, 1 beta', 1 gamma and 1 omega subunit. When a sigma factor is associated with the core the holoenzyme is formed, which can initiate transcription.

It catalyses the reaction RNA(n) + a ribonucleoside 5'-triphosphate = RNA(n+1) + diphosphate. Its function is as follows. DNA-dependent RNA polymerase catalyzes the transcription of DNA into RNA using the four ribonucleoside triphosphates as substrates. This chain is DNA-directed RNA polymerase subunit beta, found in Prochlorococcus marinus (strain NATL1A).